Reading from the N-terminus, the 529-residue chain is MQQRRPVRRALLSVSDKAGIVEFAQALSARGVELLSTGGTARLLAEKGLPVTEVSDYTGFPEMMDGRVKTLHPKVHGGILGRRGQDDAIMEEHQIQPIDMVVVNLYPFAQTVAREGCSLEDAVENIDIGGPTMVRSAAKNHKDVAIVVKSSDYDAIIKEMDDNEGSLTLATRFDLAIKAFEHTAAYDSMIANYFGSMVPAYHGESKEAAGRFPRTLNLNFIKKLDMRYGENSHQQAAFYIEENVKEASVATATQVQGKALSYNNIADTDAALECVKEFAEPACVIVKHANPCGVAIGNSILDAYDRAYKTDPTSAFGGIIAFNRELDAETAQAIISRQFVEVIIAPSASEEALKITAAKQNVRVLTCGQWGERVPGLDFKRVNGGLLVQDRDLGMVGAEELRVVTKRQPSEQELRDALFCWKVAKFVKSNAIVYAKNNMTIGIGAGQMSRVYSAKIAGIKAADEGLEVKGSSMASDAFFPFRDGIDAAAAAGVTCVIQPGGSIRDDEVIAAADEHGIAMLFTDMRHFRH.

Residues 1–148 (MQQRRPVRRA…KNHKDVAIVV (148 aa)) form the MGS-like domain. Lys287 is subject to N6-acetyllysine.

The protein belongs to the PurH family.

It catalyses the reaction (6R)-10-formyltetrahydrofolate + 5-amino-1-(5-phospho-beta-D-ribosyl)imidazole-4-carboxamide = 5-formamido-1-(5-phospho-D-ribosyl)imidazole-4-carboxamide + (6S)-5,6,7,8-tetrahydrofolate. The enzyme catalyses IMP + H2O = 5-formamido-1-(5-phospho-D-ribosyl)imidazole-4-carboxamide. The protein operates within purine metabolism; IMP biosynthesis via de novo pathway; 5-formamido-1-(5-phospho-D-ribosyl)imidazole-4-carboxamide from 5-amino-1-(5-phospho-D-ribosyl)imidazole-4-carboxamide (10-formyl THF route): step 1/1. It functions in the pathway purine metabolism; IMP biosynthesis via de novo pathway; IMP from 5-formamido-1-(5-phospho-D-ribosyl)imidazole-4-carboxamide: step 1/1. The sequence is that of Bifunctional purine biosynthesis protein PurH from Escherichia coli (strain 55989 / EAEC).